We begin with the raw amino-acid sequence, 374 residues long: UDP-N-acetylglucosamine--N-acetylmuramyl-(pentapeptide) pyrophosphoryl-undecaprenol N-acetylglucosamine transferase (374 aa).

UDP-N-acetyl-alpha-D-glucosamine-binding positions include 35 to 37, N144, R185, S211, and Q305; that span reads TGG.

The protein belongs to the glycosyltransferase 28 family. MurG subfamily.

Its subcellular location is the cell inner membrane. The catalysed reaction is di-trans,octa-cis-undecaprenyl diphospho-N-acetyl-alpha-D-muramoyl-L-alanyl-D-glutamyl-meso-2,6-diaminopimeloyl-D-alanyl-D-alanine + UDP-N-acetyl-alpha-D-glucosamine = di-trans,octa-cis-undecaprenyl diphospho-[N-acetyl-alpha-D-glucosaminyl-(1-&gt;4)]-N-acetyl-alpha-D-muramoyl-L-alanyl-D-glutamyl-meso-2,6-diaminopimeloyl-D-alanyl-D-alanine + UDP + H(+). It participates in cell wall biogenesis; peptidoglycan biosynthesis. Functionally, cell wall formation. Catalyzes the transfer of a GlcNAc subunit on undecaprenyl-pyrophosphoryl-MurNAc-pentapeptide (lipid intermediate I) to form undecaprenyl-pyrophosphoryl-MurNAc-(pentapeptide)GlcNAc (lipid intermediate II). The sequence is that of UDP-N-acetylglucosamine--N-acetylmuramyl-(pentapeptide) pyrophosphoryl-undecaprenol N-acetylglucosamine transferase from Trichodesmium erythraeum (strain IMS101).